A 97-amino-acid chain; its full sequence is Small ribosomal subunit protein bS6 (97 aa).

The protein belongs to the bacterial ribosomal protein bS6 family.

In terms of biological role, binds together with bS18 to 16S ribosomal RNA. The protein is Small ribosomal subunit protein bS6 (rpsF) of Lactococcus lactis subsp. lactis (strain IL1403) (Streptococcus lactis).